A 28-amino-acid chain; its full sequence is Endoglucanase (28 aa).

The active-site Nucleophile is the Glu20.

This sequence belongs to the glycosyl hydrolase 5 (cellulase A) family.

The protein resides in the cell membrane. It catalyses the reaction Endohydrolysis of (1-&gt;4)-beta-D-glucosidic linkages in cellulose, lichenin and cereal beta-D-glucans.. This Schizophyllum commune (Split gill fungus) protein is Endoglucanase.